A 1233-amino-acid polypeptide reads, in one-letter code: Structural maintenance of chromosomes protein 1A (1233 aa).

32-39 provides a ligand contact to ATP; that stretch reads GPNGSGKS. Coiled-coil stretches lie at residues 104-124 and 163-503; these read EYKI…LEKL and ELAQ…KAEI. The segment covering 284–293 has biased composition (basic and acidic residues); the sequence is IKEKDSELNQ. 2 disordered regions span residues 284–307 and 350–369; these read IKEK…NTSH and FEER…TLEE. Phosphoserine occurs at positions 358 and 360. The 115-residue stretch at 515–629 folds into the SMC hinge domain; the sequence is VYGRLIDLCQ…DNVEDARRIA (115 aa). Residues Lys648 and Lys713 each carry the N6-acetyllysine modification. Positions 660-935 form a coiled coil; it reads KAKARRWDEK…RHNLLQACKM (276 aa). The tract at residues 946 to 969 is disordered; the sequence is TMDDISQEEGGSQGEESVSGSQRT. The span at 953-967 shows a compositional bias: low complexity; sequence EEGGSQGEESVSGSQ. Residues Ser957, Ser962, Ser966, and Ser970 each carry the phosphoserine modification. The stretch at 991 to 1068 forms a coiled coil; sequence KDAQAEEEIK…FEQIKKERFD (78 aa). Position 1037 is an N6-acetyllysine (Lys1037).

This sequence belongs to the SMC family. SMC1 subfamily. Forms a heterodimer with SMC3 in cohesin complexes. Cohesin complexes are composed of the SMC1 (SMC1A or meiosis-specific SMC1B) and SMC3 heterodimer attached via their SMC hinge domain, RAD21 which link them, and one STAG protein (STAG1, STAG2 or meiosis-specific STAG3), which interacts with RAD21. In germ cell cohesin complexes, SMC1A is mutually exclusive with SMC1B. Found in a complex with CDCA5, SMC3 and RAD21, PDS5A/SCC-112 and PDS5B/APRIN. Interacts with STAG3, NDC80, BRAC1, BRAT1 and RPGR. Found in a complex containing POLE and SMC3. The cohesin complex interacts with the cohesin loading complex subunits NIPBL/Scc2 (via HEAT repeats) and MAU2/Scc4. NIPBL directly contacts all members of the complex, RAD21, SMC1A/B, SMC3 and STAG1. Interacts with SYCP2. In terms of processing, phosphorylated upon ionizing radiation or DNA methylation. Phosphorylation of Ser-957 and Ser-966 activates it and is required for S-phase checkpoint activation. Ubiquitinated by the DCX(DCAF15) complex, leading to its degradation.

It localises to the nucleus. It is found in the chromosome. Functionally, involved in chromosome cohesion during cell cycle and in DNA repair. Central component of cohesin complex. The cohesin complex is required for the cohesion of sister chromatids after DNA replication. The cohesin complex apparently forms a large proteinaceous ring within which sister chromatids can be trapped. At anaphase, the complex is cleaved and dissociates from chromatin, allowing sister chromatids to segregate. The cohesin complex may also play a role in spindle pole assembly during mitosis. Involved in DNA repair via its interaction with BRCA1 and its related phosphorylation by ATM, or via its phosphorylation by ATR. Works as a downstream effector both in the ATM/NBS1 branch and in the ATR/MSH2 branch of S-phase checkpoint. This Rattus norvegicus (Rat) protein is Structural maintenance of chromosomes protein 1A (Smc1a).